Consider the following 275-residue polypeptide: Nuclear egress protein 2 (275 aa).

Topologically, residues 1–251 (MAGLGKPYTG…GLKHLRIGPP (251 aa)) are perinuclear space. The interval 137–181 (KGRLGLDARPMMASMWISCFVRMPRVQLAFRFMGPEDAGRTRRIL) is interaction with NEC1. A helical transmembrane segment spans residues 252–272 (ALVLAAGLVLGAAIWWVVGAG). The Nuclear segment spans residues 273–275 (ARL).

This sequence belongs to the herpesviridae NEC2 protein family. In terms of assembly, forms a heterohexameric complex with NEC1. Interacts with glycoprotein D; this interaction recruits glycoprotein D and glycoprotein M to the inner nuclear membrane. Phosphorylated by viral kinase US3.

Its subcellular location is the host nucleus inner membrane. In terms of biological role, plays an essential role in virion nuclear egress, the first step of virion release from infected cell. Within the host nucleus, NEC1 interacts with the newly formed capsid through the vertexes and directs it to the inner nuclear membrane by associating with NEC2. Induces the budding of the capsid at the inner nuclear membrane as well as its envelopment into the perinuclear space. There, the NEC1/NEC2 complex promotes the fusion of the enveloped capsid with the outer nuclear membrane and the subsequent release of the viral capsid into the cytoplasm where it will reach the secondary budding sites in the host Golgi or trans-Golgi network. The polypeptide is Nuclear egress protein 2 (Homo sapiens (Human)).